The primary structure comprises 394 residues: Probable nucleoredoxin 2 (394 aa).

Thioredoxin domains lie at 15 to 176 (GVGG…QTLE) and 180 to 327 (SVSG…EMED).

Belongs to the nucleoredoxin family.

It catalyses the reaction [protein]-dithiol + NAD(+) = [protein]-disulfide + NADH + H(+). The enzyme catalyses [protein]-dithiol + NADP(+) = [protein]-disulfide + NADPH + H(+). Its function is as follows. Probable thiol-disulfide oxidoreductase that may participate in various redox reactions. The chain is Probable nucleoredoxin 2 from Oryza sativa subsp. japonica (Rice).